Consider the following 110-residue polypeptide: Small heat shock protein hspG11 (110 aa).

The sHSP domain maps to 30–110 (KTIIDILPPM…KSTSTSSTFR (81 aa)). Positions 78-110 (KDLNKQHNNNNNNNNNNNNLVIEKSTSTSSTFR) are disordered. Residues 85–96 (NNNNNNNNNNNN) show a composition bias toward low complexity. Positions 101–110 (KSTSTSSTFR) are enriched in polar residues.

The protein belongs to the small heat shock protein (HSP20) family.

This is Small heat shock protein hspG11 (hspG11) from Dictyostelium discoideum (Social amoeba).